We begin with the raw amino-acid sequence, 333 residues long: Protoheme IX farnesyltransferase (333 aa).

7 helical membrane-spanning segments follow: residues 64 to 84, 110 to 130, 133 to 153, 161 to 181, 189 to 209, 246 to 266, and 287 to 307; these read LICTLGGGALAAAAAGALNCL, TVFLAAVSCTLAASMLLISGV, LAAGLTLLGLCSYVILYTVIL, IVFGGVAGAIPPLVGASAATG, WLFGLVMLWTPAHFWALAILL, IMGVFALPEGGLLYGIMLLPF, and AKSLFRWSILYMFGICLLLLI.

It belongs to the UbiA prenyltransferase family. Protoheme IX farnesyltransferase subfamily.

The protein localises to the cell inner membrane. It catalyses the reaction heme b + (2E,6E)-farnesyl diphosphate + H2O = Fe(II)-heme o + diphosphate. Its pathway is porphyrin-containing compound metabolism; heme O biosynthesis; heme O from protoheme: step 1/1. Its function is as follows. Converts heme B (protoheme IX) to heme O by substitution of the vinyl group on carbon 2 of heme B porphyrin ring with a hydroxyethyl farnesyl side group. The protein is Protoheme IX farnesyltransferase of Prochlorococcus marinus (strain MIT 9312).